We begin with the raw amino-acid sequence, 142 residues long: Type II secretion system core protein G (142 aa).

Positions M1 to G8 are cleaved as a propeptide — leader sequence. The residue at position 9 (F9) is an N-methylphenylalanine. A helical transmembrane segment spans residues F9–V29. Residues S121–N142 form a disordered region.

The protein belongs to the GSP G family. As to quaternary structure, type II secretion system is composed of four main components: the outer membrane complex, the inner membrane complex, the cytoplasmic secretion ATPase and the periplasm-spanning pseudopilus. Forms homomultimers. Interacts with pseudopilin tip ternary complex made of XcpX, XcpU, XcpV and XcpW. Interacts with PilA. Cleaved by the prepilin peptidase. Post-translationally, methylated by prepilin peptidase at the amino group of the N-terminal phenylalanine once the leader sequence is cleaved.

The protein resides in the cell inner membrane. Core component of the type II secretion system required for the energy-dependent secretion of extracellular factors such as proteases and toxins from the periplasm. Pseudopilin (pilin-like) protein that polymerizes to form the pseudopilus. Further polymerization triggers pseudopilus growth. Type II pseudopilus confers increased bacterial adhesive capabilities. This is Type II secretion system core protein G (xcpT) from Pseudomonas aeruginosa (strain ATCC 15692 / DSM 22644 / CIP 104116 / JCM 14847 / LMG 12228 / 1C / PRS 101 / PAO1).